Reading from the N-terminus, the 648-residue chain is MASVSALTEELESVASELHAIDIQIQELTERRQELLQRKSVLTGKIKQYLEDSSAEASSDLDTSPAAWNKEDFPWFGKVKDVLQNVFKLQKFRPLQLETINVTMARKDIFLVMPTGGGKSLCYQLPALCSDGFTLVICPLISLMEDQLMVLKQLGISATMLNASSSKEHVKWVHAEMVNKNSQLKLIYVTPEKIAKSKMFMSRLEKAYEAGRLTGAAVDEVHCCSQWGHDFRPDYKALGILKRQFPNASLMGLTATATNHVLKDVQKILCVGKCLTFTASFNRPNLFYEVRQKPSSAEDFTEDIVKLINGRYKGQSGIIYCFSQKDSEQITISLQKLGIHAGTYHANMEPEDKTKVHTQWSANELQVVVATVAFGMGIDKPDVRFVIHHSMSKSMENYYQESGRAGRDDSRADCILYYGFGDIFRISSMVVMENVGQQKLYEMVSYCQNVSKCRRVLIAQHFDEVWNADACNKMCDNCCKDVSFEKKNVTQHCRDLIKILKQAEGLNEKLTPLKLIDAWMGKGAAKLRVAGVVAPALPREDLERIVAHALLQQYLKEDYSFTAYATISYLKVGPRACLLSNEAHAVTMQVKKSAQSSVRGALSEARQVEQVDSKGEEQSSGNSQKSKSRLQPSGSKNAGAKKRKLDDA.

The Helicase ATP-binding domain occupies 100-275; that stretch reads INVTMARKDI…QKILCVGKCL (176 aa). 113–120 is a binding site for ATP; that stretch reads MPTGGGKS. A DEVH box motif is present at residues 219–222; it reads DEVH. The Helicase C-terminal domain occupies 299-451; it reads DFTEDIVKLI…EMVSYCQNVS (153 aa). 4 residues coordinate Zn(2+): cysteine 453, cysteine 471, cysteine 475, and cysteine 478. N6-acetyllysine is present on residues lysine 514 and lysine 522. A Phosphoserine modification is found at serine 597. The interval 601–648 is disordered; it reads ALSEARQVEQVDSKGEEQSSGNSQKSKSRLQPSGSKNAGAKKRKLDDA. Over residues 606–617 the composition is skewed to basic and acidic residues; the sequence is RQVEQVDSKGEE. The span at 618–636 shows a compositional bias: polar residues; sequence QSSGNSQKSKSRLQPSGSK. Serine 633 is modified (phosphoserine). Positions 639 to 648 are enriched in basic residues; it reads GAKKRKLDDA.

This sequence belongs to the helicase family. RecQ subfamily. May form homodimers or higher order oligomers. Interacts with EXO1. Interacts with MLH1. Interacts with PARP1. The cofactor is Mg(2+). Requires Mn(2+) as cofactor. It depends on Zn(2+) as a cofactor. As to expression, expressed in all tissues examined. In terms of tissue distribution, only expressed in spermatocytes. Expression increases at pachytene (17 days old) and decreases after completion of meiosis II (7 weeks old).

It localises to the nucleus. It carries out the reaction Couples ATP hydrolysis with the unwinding of duplex DNA by translocating in the 3'-5' direction.. The enzyme catalyses ATP + H2O = ADP + phosphate + H(+). It catalyses the reaction dATP + H2O = dADP + phosphate + H(+). DNA helicase that plays a role in DNA damage repair and genome stability. Exhibits a magnesium- and ATP-dependent DNA-helicase activity that unwinds single- and double-stranded DNA in a 3'-5' direction. Plays a role in restoring regressed replication forks. Required to restart stalled replication forks induced by abortive topoisomerase 1 and 2 lesions. May play a role in the repair of DNA that is damaged by ultraviolet light or other mutagens. The sequence is that of ATP-dependent DNA helicase Q1 (Recql) from Mus musculus (Mouse).